The sequence spans 223 residues: 2-C-methyl-D-erythritol 4-phosphate cytidylyltransferase (223 aa).

This sequence belongs to the IspD/TarI cytidylyltransferase family. IspD subfamily.

The catalysed reaction is 2-C-methyl-D-erythritol 4-phosphate + CTP + H(+) = 4-CDP-2-C-methyl-D-erythritol + diphosphate. The protein operates within isoprenoid biosynthesis; isopentenyl diphosphate biosynthesis via DXP pathway; isopentenyl diphosphate from 1-deoxy-D-xylulose 5-phosphate: step 2/6. Its function is as follows. Catalyzes the formation of 4-diphosphocytidyl-2-C-methyl-D-erythritol from CTP and 2-C-methyl-D-erythritol 4-phosphate (MEP). The chain is 2-C-methyl-D-erythritol 4-phosphate cytidylyltransferase from Synechococcus sp. (strain WH7803).